Consider the following 240-residue polypeptide: Nuclear receptor-interacting protein 3 (240 aa).

In Pongo abelii (Sumatran orangutan), this protein is Nuclear receptor-interacting protein 3 (NRIP3).